The chain runs to 325 residues: Biotin synthase (325 aa).

The region spanning 51–280 (FMGRKADLCT…NVYIRYAGGR (230 aa)) is the Radical SAM core domain. The [4Fe-4S] cluster site is built by Cys69, Cys73, and Cys76. Ser113, Cys145, Cys205, and Arg275 together coordinate [2Fe-2S] cluster.

The protein belongs to the radical SAM superfamily. Biotin synthase family. In terms of assembly, homodimer. [4Fe-4S] cluster serves as cofactor. The cofactor is [2Fe-2S] cluster.

It carries out the reaction (4R,5S)-dethiobiotin + (sulfur carrier)-SH + 2 reduced [2Fe-2S]-[ferredoxin] + 2 S-adenosyl-L-methionine = (sulfur carrier)-H + biotin + 2 5'-deoxyadenosine + 2 L-methionine + 2 oxidized [2Fe-2S]-[ferredoxin]. It participates in cofactor biosynthesis; biotin biosynthesis; biotin from 7,8-diaminononanoate: step 2/2. Its function is as follows. Catalyzes the conversion of dethiobiotin (DTB) to biotin by the insertion of a sulfur atom into dethiobiotin via a radical-based mechanism. This chain is Biotin synthase, found in Clostridioides difficile (strain 630) (Peptoclostridium difficile).